Reading from the N-terminus, the 648-residue chain is MAPLTPQLLLQRGRPKTDKLGKIQSLNLSGLQLLSEHLDPNLLGRLKKLRELDLSNNLLETLPANLGLSHLRILRCTNNQLGDVTALHQFPELEELNLEGNPFLTVSDNLKVSFLLPKLRKVNGKDTASTCSQVENLDRELMDRVTAHWQKFIATVSPEEETDKVRADFMRSAVRDVCYGPESLIEFTQWRVRMIAEELVASGGAQVQDAKVPVEHPQAAGASKFRAREVASKRPGKDPVTLPPSKRVRALPPAQAEGSPMGADGGQAALHLEPLHFLQCHSRNNSPKDLETQLWACAFEPAREEGHSRATSQTVATCGGEAVCVIDCQTGLVLHKYKVPGEEFFSVAWTALTVVTQAGHKKRWNMLAAAGLRGMVRLLHVRAGFCCSVIRAHKKAIATLCFSPSHETHLFTASYDKRIILWDIGVPNQDYKFQASQLLTLNCGSVPLRLCPVATCPDDFLLAGCEGGCYCWDVRLDQPQKQRVCEVNFIFSEDSKVSGQRVDGLAFVNEDVVASKGSGQGTIYLWSWSQTWAGRGRQSVLPVVILVRLQWSPTNLAYFSLSTCPGKNLVLCGDEEGSVWIYDVEHLLKEPPQATTLQPPTQILKWPQPTALGQPVTKTMINTVVANAAFTYLTALTDSNIVSIWRRC.

LRR repeat units lie at residues 22 to 43 (KIQS…PNLL), 48 to 69 (KLRE…LGLS), 70 to 91 (HLRI…HQFP), and 92 to 113 (ELEE…LKVS). The interval 214–262 (VEHPQAAGASKFRAREVASKRPGKDPVTLPPSKRVRALPPAQAEGSPMG) is disordered. The segment covering 226–237 (RAREVASKRPGK) has biased composition (basic and acidic residues). Serine 259 is modified (phosphoserine). WD repeat units lie at residues 392–432 (AHKK…QDYK), 443–482 (CGSV…PQKQ), 497–536 (VSGQ…AGRG), 541–592 (LPVV…KEPP), and 616–648 (VTKT…WRRC).

This sequence belongs to the LRWD1 family. In terms of assembly, integral component of the ORC complex. Directly interacts with CDT1, GMNN and ORC2. Interacts with ORC2 only when non-ubiquitinated; this interaction prevents LRWD1 ubiquitination and degradation. Some of these interactions are regulated in a cell-cycle dependent manner. Interaction with ORC1 occurs predominantly during G1. Association with phosphorylated ORC1 during mitosis is not efficient. Interaction with CDT1 occurs during G1 phase, as well as during mitosis with phosphorylated CDT1. Interaction with GMNN occurs from G1/S to mitosis. Interaction with ORC2 is observed throughout the cell cycle. The stoichiometry of the ORCA/ORC/CDT1/GMNN complex is 1:1:1:2. Interacts with CUL4A and DDB1; this interaction may lead to ubiquitination. Post-translationally, ubiquitinated; undergoes 'Lys-48'-linked polyubiquitination leading to proteasomal degradation. Ubiquitination occurs within the WD repeats at the end of the G1 phase. Ubiquitination may be catalyzed by the CUL4-DDB1 E3 ubiquitin-protein ligase complex and other E3 ligases. In terms of tissue distribution, testis-specific.

It is found in the nucleus. It localises to the chromosome. The protein localises to the centromere. Its subcellular location is the telomere. The protein resides in the cytoplasm. It is found in the cytoskeleton. It localises to the microtubule organizing center. The protein localises to the centrosome. Its subcellular location is the kinetochore. Its function is as follows. Required for G1/S transition. Recruits and stabilizes the origin recognition complex (ORC) onto chromatin during G1 to establish pre-replication complex (preRC) and to heterochromatic sites in post-replicated cells. Binds a combination of DNA and histone methylation repressive marks on heterochromatin. Binds histone H3 and H4 trimethylation marks H3K9me3, H3K27me3 and H4K20me3 in a cooperative manner with DNA methylation. Required for silencing of major satellite repeats. May be important ORC2, ORC3 and ORC4 stability. The protein is Leucine-rich repeat and WD repeat-containing protein 1 (LRWD1) of Mus musculus (Mouse).